The chain runs to 338 residues: Formamidase (338 aa).

Residues 14–260 enclose the CN hydrolase domain; sequence LLIAAIQYPV…WEIVTAELFP (247 aa). Glu60 (proton acceptor) is an active-site residue. Catalysis depends on Lys133, which acts as the Proton donor. The active-site Nucleophile is the Cys166.

The protein belongs to the carbon-nitrogen hydrolase superfamily. Aliphatic amidase family.

It carries out the reaction formamide + H2O = formate + NH4(+). Functionally, is an aliphatic amidase with a restricted substrate specificity, as it only hydrolyzes formamide. The protein is Formamidase of Photorhabdus laumondii subsp. laumondii (strain DSM 15139 / CIP 105565 / TT01) (Photorhabdus luminescens subsp. laumondii).